The primary structure comprises 308 residues: Cilia- and flagella-associated protein 73 (308 aa).

2 coiled-coil regions span residues 103–134 and 164–227; these read RIQK…LEKN and LSAT…QEAK.

The protein belongs to the CFAP73 family. As to quaternary structure, interacts with FAP100; form the modifier of inner arm (MIA) complex.

It is found in the cytoplasm. It localises to the cytoskeleton. The protein localises to the flagellum axoneme. As part of MIA, a complex associated with the outer doublet microtubules of the axoneme, may play a role in ciliary/flagellar motility by regulating the assembly and the activity of inner dynein arm. This chain is Cilia- and flagella-associated protein 73, found in Chlamydomonas reinhardtii (Chlamydomonas smithii).